Reading from the N-terminus, the 444-residue chain is Alpha-N-acetylgalactosaminidase (444 aa).

Residues 30-31 (LR), D52, N80, 101-104 (WEWH), H107, 121-122 (EV), and N150 each bind NAD(+). Substrate is bound at residue Y179. 208–212 (SEAKW) contacts NAD(+). Residues R213, 225–228 (YPTH), and Y307 each bind substrate. Y225 is a binding site for NAD(+).

This sequence belongs to the Gfo/Idh/MocA family. Glycosyl hydrolase 109 subfamily. NAD(+) is required as a cofactor.

The catalysed reaction is Cleavage of non-reducing alpha-(1-&gt;3)-N-acetylgalactosamine residues from human blood group A and AB mucin glycoproteins, Forssman hapten and blood group A lacto series glycolipids.. Its function is as follows. Glycosidase that has specific alpha-N-acetylgalactosaminidase activity. In Elizabethkingia meningoseptica (Chryseobacterium meningosepticum), this protein is Alpha-N-acetylgalactosaminidase (nagA).